The following is a 199-amino-acid chain: Acireductone dioxygenase 3 (199 aa).

Histidine 99, histidine 101, glutamate 105, and histidine 144 together coordinate Fe(2+). Ni(2+)-binding residues include histidine 99, histidine 101, glutamate 105, and histidine 144.

This sequence belongs to the acireductone dioxygenase (ARD) family. Requires Fe(2+) as cofactor. It depends on Ni(2+) as a cofactor.

It is found in the cytoplasm. It localises to the nucleus. It carries out the reaction 1,2-dihydroxy-5-(methylsulfanyl)pent-1-en-3-one + O2 = 4-methylsulfanyl-2-oxobutanoate + formate + 2 H(+). The enzyme catalyses 1,2-dihydroxy-5-(methylsulfanyl)pent-1-en-3-one + O2 = 3-(methylsulfanyl)propanoate + CO + formate + 2 H(+). The protein operates within amino-acid biosynthesis; L-methionine biosynthesis via salvage pathway; L-methionine from S-methyl-5-thio-alpha-D-ribose 1-phosphate: step 5/6. Its function is as follows. Catalyzes 2 different reactions between oxygen and the acireductone 1,2-dihydroxy-3-keto-5-methylthiopentene (DHK-MTPene) depending upon the metal bound in the active site. Fe-containing acireductone dioxygenase (Fe-ARD) produces formate and 2-keto-4-methylthiobutyrate (KMTB), the alpha-ketoacid precursor of methionine in the methionine recycle pathway. Ni-containing acireductone dioxygenase (Ni-ARD) produces methylthiopropionate, carbon monoxide and formate, and does not lie on the methionine recycle pathway. The chain is Acireductone dioxygenase 3 (ARD3) from Arabidopsis thaliana (Mouse-ear cress).